The sequence spans 144 residues: HTH-type transcriptional regulator LrpC (144 aa).

The 62-residue stretch at 3–64 (LDQIDLNIIE…EVDQKKLGLP (62 aa)) folds into the HTH asnC-type domain. A DNA-binding region (H-T-H motif) is located at residues 22–41 (MRELGRKIKLSPPSVTERVR).

Functionally, transcriptional regulator with a possible role in regulation of amino acid metabolism. Plays a role in the growth phase transition. This is HTH-type transcriptional regulator LrpC (lrpC) from Bacillus subtilis (strain 168).